Consider the following 318-residue polypeptide: Biotin synthase (318 aa).

The 227-residue stretch at 44–270 (LCGDAVNLCS…INPTANIRLA (227 aa)) folds into the Radical SAM core domain. [4Fe-4S] cluster is bound by residues cysteine 62, cysteine 66, and cysteine 69. Residues serine 106, cysteine 138, cysteine 198, and arginine 268 each coordinate [2Fe-2S] cluster.

It belongs to the radical SAM superfamily. Biotin synthase family. In terms of assembly, homodimer. Requires [4Fe-4S] cluster as cofactor. The cofactor is [2Fe-2S] cluster.

It carries out the reaction (4R,5S)-dethiobiotin + (sulfur carrier)-SH + 2 reduced [2Fe-2S]-[ferredoxin] + 2 S-adenosyl-L-methionine = (sulfur carrier)-H + biotin + 2 5'-deoxyadenosine + 2 L-methionine + 2 oxidized [2Fe-2S]-[ferredoxin]. The protein operates within cofactor biosynthesis; biotin biosynthesis; biotin from 7,8-diaminononanoate: step 2/2. Its function is as follows. Catalyzes the conversion of dethiobiotin (DTB) to biotin by the insertion of a sulfur atom into dethiobiotin via a radical-based mechanism. This is Biotin synthase from Alkaliphilus metalliredigens (strain QYMF).